The primary structure comprises 2773 residues: Peramine synthetase A (2773 aa).

Positions 246 to 644 (FEDQVYSQPL…GRKDAQVKIR (399 aa)) are adenylation 1. In terms of domain architecture, Carrier 1 spans 774–850 (QPTCEMEERM…DLAKNCSQTL (77 aa)). Residue Ser811 is modified to O-(pantetheine 4'-phosphoryl)serine. The interval 888–1301 (QDAYPCTRLQ…MSSAEDLEQI (414 aa)) is condensation. An adenylation 2 region spans residues 1321 to 1720 (ADQVQARPDS…GRKDTQVKVR (400 aa)). The methylation (Met) domain stretch occupies residues 1810–1949 (IGRDFVGWSS…IIQHLASLGS (140 aa)). The segment at 2250 to 2271 (MLSESLQQKAPPTARKRLPSTA) is disordered. The Carrier 2 domain occupies 2267-2345 (LPSTAPERAM…HLLQTAAAGV (79 aa)). Ser2304 is modified (O-(pantetheine 4'-phosphoryl)serine). The thiesterase (TE) domain stretch occupies residues 2397-2715 (TVVLTGANGF…LQDLADTARS (319 aa)).

This sequence belongs to the NRP synthetase family. Requires pantetheine 4'-phosphate as cofactor.

The catalysed reaction is (S)-1-pyrroline-5-carboxylate + L-arginine + S-adenosyl-L-methionine + 2 ATP = peramine + 2 AMP + S-adenosyl-L-homocysteine + 2 diphosphate + H2O + 2 H(+). Nonribosomal peptide synthetase involved in the biosynthesis of peramine, a pyrrolopyrazine synthesized in association with the grass host that protects the plant from insect herbivory. The single multifunctional NRPS perA seems to be responsible for all catalytic steps in the biosynthesis of peramine. The condensation domain of perA is proposed to catalyze formation of a peptide bond between 1-pyrroline-5-carboxylate and arginine. The methylation domain of perA would catalyze the N-methylation of the alpha-amino group of arginine. The reductase domain is proposed to be responsible for reduction of the thioester and the cyclization to form an iminium ion resulting in release from the peptide synthetase. Deprotonation of this intermediate and oxidation of the pyrroline ring would give rise to peramine. This final oxidation to give the pyrrole functionality may be spontaneous. The protein is Peramine synthetase A of Epichloe festucae (strain Fl1).